Consider the following 63-residue polypeptide: 2-hydroxymuconate tautomerase (63 aa).

Pro2 acts as the Proton acceptor; via imino nitrogen in catalysis.

Belongs to the 4-oxalocrotonate tautomerase family. As to quaternary structure, homohexamer.

The enzyme catalyses (2Z,4E)-2-hydroxyhexa-2,4-dienedioate = (3E)-2-oxohex-3-enedioate. The protein operates within xenobiotic degradation; toluene degradation. It participates in xenobiotic degradation; xylene degradation. Catalyzes the ketonization of 2-hydroxymuconate stereoselectively to yield 2-oxo-3-hexenedioate. This Pseudomonas putida (Arthrobacter siderocapsulatus) protein is 2-hydroxymuconate tautomerase (xylH).